We begin with the raw amino-acid sequence, 329 residues long: Thiamine thiazole synthase (329 aa).

Residues C86, 107 to 108, G115, and V180 contribute to the substrate site; that span reads EA. Residue C218 is modified to 2,3-didehydroalanine (Cys). Substrate contacts are provided by residues D220, H235, M287, and 297–299; that span reads RMG.

The protein belongs to the THI4 family. Homooctamer. Fe cation is required as a cofactor. In terms of processing, during the catalytic reaction, a sulfide is transferred from Cys-218 to a reaction intermediate, generating a dehydroalanine residue.

The protein resides in the cytoplasm. It localises to the nucleus. The catalysed reaction is [ADP-thiazole synthase]-L-cysteine + glycine + NAD(+) = [ADP-thiazole synthase]-dehydroalanine + ADP-5-ethyl-4-methylthiazole-2-carboxylate + nicotinamide + 3 H2O + 2 H(+). In terms of biological role, involved in biosynthesis of the thiamine precursor thiazole. Catalyzes the conversion of NAD and glycine to adenosine diphosphate 5-(2-hydroxyethyl)-4-methylthiazole-2-carboxylic acid (ADT), an adenylated thiazole intermediate. The reaction includes an iron-dependent sulfide transfer from a conserved cysteine residue of the protein to a thiazole intermediate. The enzyme can only undergo a single turnover, which suggests it is a suicide enzyme. May have additional roles in adaptation to various stress conditions and in DNA damage tolerance. This is Thiamine thiazole synthase from Phaeosphaeria nodorum (strain SN15 / ATCC MYA-4574 / FGSC 10173) (Glume blotch fungus).